We begin with the raw amino-acid sequence, 229 residues long: Cell division protein FtsQ (229 aa).

Residues 1–21 form a helical membrane-spanning segment; it reads MIVLLCVIFAFLVYSNWHSWL. Topologically, residues 22–229 are periplasmic; that stretch reads ESLDRNPIRA…AAVGFSPLPK (208 aa). The POTRA domain maps to 27 to 97; sequence NPIRAYALTH…DRLSITLIEH (71 aa).

This sequence belongs to the FtsQ/DivIB family. FtsQ subfamily. Part of a complex composed of FtsB, FtsL and FtsQ.

The protein localises to the cell inner membrane. In terms of biological role, essential cell division protein. May link together the upstream cell division proteins, which are predominantly cytoplasmic, with the downstream cell division proteins, which are predominantly periplasmic. May control correct divisome assembly. This Actinobacillus pleuropneumoniae serotype 3 (strain JL03) protein is Cell division protein FtsQ.